The primary structure comprises 140 residues: Large ribosomal subunit protein uL11 (140 aa).

It belongs to the universal ribosomal protein uL11 family. In terms of assembly, part of the ribosomal stalk of the 50S ribosomal subunit. Interacts with L10 and the large rRNA to form the base of the stalk. L10 forms an elongated spine to which L12 dimers bind in a sequential fashion forming a multimeric L10(L12)X complex. In terms of processing, one or more lysine residues are methylated.

Forms part of the ribosomal stalk which helps the ribosome interact with GTP-bound translation factors. The chain is Large ribosomal subunit protein uL11 from Karelsulcia muelleri (strain GWSS) (Sulcia muelleri).